We begin with the raw amino-acid sequence, 419 residues long: Arginine biosynthesis bifunctional protein ArgJ 1, mitochondrial (419 aa).

Substrate is bound by residues lysine 177, threonine 188, glutamate 275, asparagine 414, and threonine 419. Catalysis depends on threonine 188, which acts as the Nucleophile.

It belongs to the ArgJ family. In terms of assembly, heterodimer of an alpha and a beta chain. Post-translationally, the alpha and beta chains are autoproteolytically processed from a single precursor protein within the mitochondrion.

The protein resides in the mitochondrion matrix. The catalysed reaction is N(2)-acetyl-L-ornithine + L-glutamate = N-acetyl-L-glutamate + L-ornithine. It catalyses the reaction L-glutamate + acetyl-CoA = N-acetyl-L-glutamate + CoA + H(+). Its pathway is amino-acid biosynthesis; L-arginine biosynthesis; L-ornithine and N-acetyl-L-glutamate from L-glutamate and N(2)-acetyl-L-ornithine (cyclic): step 1/1. It participates in amino-acid biosynthesis; L-arginine biosynthesis; N(2)-acetyl-L-ornithine from L-glutamate: step 1/4. Its function is as follows. Catalyzes two activities which are involved in the cyclic version of arginine biosynthesis: the synthesis of acetylglutamate from glutamate and acetyl-CoA, and of ornithine by transacetylation between acetylornithine and glutamate. The sequence is that of Arginine biosynthesis bifunctional protein ArgJ 1, mitochondrial from Sclerotinia sclerotiorum (strain ATCC 18683 / 1980 / Ss-1) (White mold).